We begin with the raw amino-acid sequence, 910 residues long: DNA mismatch repair protein MutS (910 aa).

615 to 622 serves as a coordination point for ATP; the sequence is GPNMAGKS.

This sequence belongs to the DNA mismatch repair MutS family.

Its function is as follows. This protein is involved in the repair of mismatches in DNA. It is possible that it carries out the mismatch recognition step. This protein has a weak ATPase activity. The chain is DNA mismatch repair protein MutS from Clostridium perfringens (strain ATCC 13124 / DSM 756 / JCM 1290 / NCIMB 6125 / NCTC 8237 / Type A).